The chain runs to 205 residues: Holliday junction branch migration complex subunit RuvA (205 aa).

The tract at residues 1–62 is domain I; the sequence is MFEYVTGYVE…EDIMALYGFK (62 aa). Positions 63 to 141 are domain II; that stretch reads TREERLLFTK…DVVPDAFVDL (79 aa). Residues 142-152 are flexible linker; sequence FSDTESFDTKK. The segment at 153–205 is domain III; the sequence is GSSVELDEALEALRALGYAEREVSRVVPELLKESLTTDQYIKKALSLLLNGKR.

Belongs to the RuvA family. In terms of assembly, homotetramer. Forms an RuvA(8)-RuvB(12)-Holliday junction (HJ) complex. HJ DNA is sandwiched between 2 RuvA tetramers; dsDNA enters through RuvA and exits via RuvB. An RuvB hexamer assembles on each DNA strand where it exits the tetramer. Each RuvB hexamer is contacted by two RuvA subunits (via domain III) on 2 adjacent RuvB subunits; this complex drives branch migration. In the full resolvosome a probable DNA-RuvA(4)-RuvB(12)-RuvC(2) complex forms which resolves the HJ.

The protein resides in the cytoplasm. Functionally, the RuvA-RuvB-RuvC complex processes Holliday junction (HJ) DNA during genetic recombination and DNA repair, while the RuvA-RuvB complex plays an important role in the rescue of blocked DNA replication forks via replication fork reversal (RFR). RuvA specifically binds to HJ cruciform DNA, conferring on it an open structure. The RuvB hexamer acts as an ATP-dependent pump, pulling dsDNA into and through the RuvAB complex. HJ branch migration allows RuvC to scan DNA until it finds its consensus sequence, where it cleaves and resolves the cruciform DNA. This is Holliday junction branch migration complex subunit RuvA from Bacillus mycoides (strain KBAB4) (Bacillus weihenstephanensis).